Consider the following 124-residue polypeptide: Iron-sulfur cluster insertion protein ErpA (124 aa).

3 residues coordinate iron-sulfur cluster: Cys52, Cys116, and Cys118.

The protein belongs to the HesB/IscA family. In terms of assembly, homodimer. Iron-sulfur cluster is required as a cofactor.

Its function is as follows. Required for insertion of 4Fe-4S clusters for at least IspG. This Vibrio atlanticus (strain LGP32) (Vibrio splendidus (strain Mel32)) protein is Iron-sulfur cluster insertion protein ErpA.